Consider the following 574-residue polypeptide: High-affinity methionine permease (574 aa).

Residues 1-61 lie on the Cytoplasmic side of the membrane; sequence MSEGRTFLSQ…TELDQGEKQL (61 aa). Lys-28 is covalently cross-linked (Glycyl lysine isopeptide (Lys-Gly) (interchain with G-Cter in ubiquitin)). The helical transmembrane segment at 62–82 threads the bilayer; that stretch reads GILSCIGLICNRMLGTGVFAV. Residues 83 to 92 are Extracellular-facing; it reads SSTIYTLCGS. Residues 93–113 traverse the membrane as a helical segment; that stretch reads VGLALIMWAVGAIIAISGLYV. At 114–140 the chain is on the cytoplasmic side; that stretch reads YMEFGTAIPKNGGEKNYLEAIFRKPKF. Residues 141–161 form a helical membrane-spanning segment; it reads FITCMYAAYIFFLGWAAGNSI. The Extracellular portion of the chain corresponds to 162–182; sequence NTAIMFLTAADTEVTKWNQRG. A helical transmembrane segment spans residues 183-203; the sequence is IGVAVVFFAFLINSLNVKIGL. Residues 204–207 are Cytoplasmic-facing; the sequence is YLQN. Residues 208–228 form a helical membrane-spanning segment; sequence ILGIFKIGIVLFISITGWVAL. The Extracellular segment spans residues 229–293; sequence GGGLKDGYQS…VRTLKIAGPT (65 aa). Residues 294–314 traverse the membrane as a helical segment; sequence SMVFLAIIYIFVNIAYFAVVP. The Cytoplasmic segment spans residues 315 to 340; sequence KDKLISSKLILAADFFDIVFGGQAKR. The chain crosses the membrane as a helical span at residues 341–361; sequence AAAALVGLSALGNVLSVIFSQ. The Extracellular portion of the chain corresponds to 362–418; the sequence is GRIIQQLGREGVLPFSNFFASSKPFNSPMVGLFQHFIVCTVTILAPPPGDAYLLVQN. The helical transmembrane segment at 419-439 threads the bilayer; it reads LISYPMNIINFAISAGLLWIY. Topologically, residues 440–455 are cytoplasmic; that stretch reads WQRRQGKIEWNPPIKA. The helical transmembrane segment at 456–476 threads the bilayer; sequence GVFVTGFFTLSNLYLIIAPYV. Residues 477 to 490 lie on the Extracellular side of the membrane; sequence PPSNGESVYSSMPY. Residues 491–511 form a helical membrane-spanning segment; the sequence is WIHCVIAWGIFFFGGVYYVVW. Over 512 to 574 the chain is Cytoplasmic; sequence AQLLPRWGHY…HYKSEQEKSL (63 aa). Phosphothreonine is present on Thr-552. Ser-573 carries the post-translational modification Phosphoserine.

It to yeast low affinity methionine permease (MUP3).

The protein localises to the membrane. Its function is as follows. High affinity permease for methionine. In Saccharomyces cerevisiae (strain ATCC 204508 / S288c) (Baker's yeast), this protein is High-affinity methionine permease (MUP1).